The following is a 448-amino-acid chain: Tubulin beta chain (448 aa).

Positions 11, 69, 138, 142, 143, 144, 204, and 226 each coordinate GTP. E69 is a Mg(2+) binding site. The interval 429–448 is disordered; it reads SISDGEEQPYAEEAAYEAEE. A compositionally biased stretch (acidic residues) spans 432 to 448; that stretch reads DGEEQPYAEEAAYEAEE.

This sequence belongs to the tubulin family. In terms of assembly, dimer of alpha and beta chains. A typical microtubule is a hollow water-filled tube with an outer diameter of 25 nm and an inner diameter of 15 nM. Alpha-beta heterodimers associate head-to-tail to form protofilaments running lengthwise along the microtubule wall with the beta-tubulin subunit facing the microtubule plus end conferring a structural polarity. Microtubules usually have 13 protofilaments but different protofilament numbers can be found in some organisms and specialized cells. It depends on Mg(2+) as a cofactor.

Its subcellular location is the cytoplasm. The protein resides in the cytoskeleton. In terms of biological role, tubulin is the major constituent of microtubules, a cylinder consisting of laterally associated linear protofilaments composed of alpha- and beta-tubulin heterodimers. Microtubules grow by the addition of GTP-tubulin dimers to the microtubule end, where a stabilizing cap forms. Below the cap, tubulin dimers are in GDP-bound state, owing to GTPase activity of alpha-tubulin. The polypeptide is Tubulin beta chain (Aspergillus fumigatus (strain ATCC MYA-4609 / CBS 101355 / FGSC A1100 / Af293) (Neosartorya fumigata)).